Here is a 37-residue protein sequence, read N- to C-terminus: Large ribosomal subunit protein bL36c (37 aa).

Belongs to the bacterial ribosomal protein bL36 family.

The protein localises to the plastid. It localises to the chloroplast. In Chara vulgaris (Common stonewort), this protein is Large ribosomal subunit protein bL36c.